A 257-amino-acid polypeptide reads, in one-letter code: Type III pantothenate kinase (257 aa).

6 to 13 (DCGNTNTV) contributes to the ATP binding site. 107-110 (GPDR) lines the substrate pocket. The active-site Proton acceptor is Asp-109. Residue Asp-129 coordinates K(+). Thr-132 lines the ATP pocket. Thr-184 provides a ligand contact to substrate.

It belongs to the type III pantothenate kinase family. Homodimer. It depends on NH4(+) as a cofactor. K(+) is required as a cofactor.

It is found in the cytoplasm. The enzyme catalyses (R)-pantothenate + ATP = (R)-4'-phosphopantothenate + ADP + H(+). It participates in cofactor biosynthesis; coenzyme A biosynthesis; CoA from (R)-pantothenate: step 1/5. Its function is as follows. Catalyzes the phosphorylation of pantothenate (Pan), the first step in CoA biosynthesis. The polypeptide is Type III pantothenate kinase (Cereibacter sphaeroides (strain ATCC 17025 / ATH 2.4.3) (Rhodobacter sphaeroides)).